Consider the following 1068-residue polypeptide: Carbamoyl phosphate synthase large chain (1068 aa).

The tract at residues 1–401 is carboxyphosphate synthetic domain; the sequence is MPLNKDIKKV…AFLKGTRSLE (401 aa). Residues Arg-129, Arg-169, Gly-175, Gly-176, Lys-208, Val-210, Glu-215, Gly-241, Ile-242, His-243, Gln-284, and Glu-298 each contribute to the ATP site. One can recognise an ATP-grasp 1 domain in the interval 133-327; that stretch reads RNVMSRINEP…IAKVASKIAL (195 aa). Gln-284, Glu-298, and Asn-300 together coordinate Mg(2+). Mn(2+) contacts are provided by Gln-284, Glu-298, and Asn-300. An oligomerization domain region spans residues 402–549; the sequence is IGKYSLEHKK…YSTYDVYDEV (148 aa). The carbamoyl phosphate synthetic domain stretch occupies residues 550–932; the sequence is EVSKNKKVIV…ALYKGFIGAN (383 aa). The region spanning 674-864 is the ATP-grasp 2 domain; the sequence is DELLEKLKIA…IVDIATRVML (191 aa). ATP-binding residues include Arg-710, Lys-749, Leu-751, Glu-755, Gly-780, Val-781, His-782, Ser-783, Gln-823, and Glu-835. The Mg(2+) site is built by Gln-823, Glu-835, and Asn-837. Residues Gln-823, Glu-835, and Asn-837 each coordinate Mn(2+). Positions 933-1068 constitute an MGS-like domain; the sequence is ISIKKEKGTV…ETLYIFDLSN (136 aa). Residues 933–1068 form an allosteric domain region; that stretch reads ISIKKEKGTV…ETLYIFDLSN (136 aa).

Belongs to the CarB family. As to quaternary structure, composed of two chains; the small (or glutamine) chain promotes the hydrolysis of glutamine to ammonia, which is used by the large (or ammonia) chain to synthesize carbamoyl phosphate. Tetramer of heterodimers (alpha,beta)4. Mg(2+) is required as a cofactor. The cofactor is Mn(2+).

It catalyses the reaction hydrogencarbonate + L-glutamine + 2 ATP + H2O = carbamoyl phosphate + L-glutamate + 2 ADP + phosphate + 2 H(+). The enzyme catalyses hydrogencarbonate + NH4(+) + 2 ATP = carbamoyl phosphate + 2 ADP + phosphate + 2 H(+). It participates in amino-acid biosynthesis; L-arginine biosynthesis; carbamoyl phosphate from bicarbonate: step 1/1. The protein operates within pyrimidine metabolism; UMP biosynthesis via de novo pathway; (S)-dihydroorotate from bicarbonate: step 1/3. In terms of biological role, large subunit of the glutamine-dependent carbamoyl phosphate synthetase (CPSase). CPSase catalyzes the formation of carbamoyl phosphate from the ammonia moiety of glutamine, carbonate, and phosphate donated by ATP, constituting the first step of 2 biosynthetic pathways, one leading to arginine and/or urea and the other to pyrimidine nucleotides. The large subunit (synthetase) binds the substrates ammonia (free or transferred from glutamine from the small subunit), hydrogencarbonate and ATP and carries out an ATP-coupled ligase reaction, activating hydrogencarbonate by forming carboxy phosphate which reacts with ammonia to form carbamoyl phosphate. This is Carbamoyl phosphate synthase large chain from Clostridium botulinum (strain Langeland / NCTC 10281 / Type F).